Consider the following 94-residue polypeptide: Small ribosomal subunit protein uS19 (94 aa).

The protein belongs to the universal ribosomal protein uS19 family.

Its function is as follows. Protein S19 forms a complex with S13 that binds strongly to the 16S ribosomal RNA. This chain is Small ribosomal subunit protein uS19, found in Anaplasma phagocytophilum (strain HZ).